Here is a 752-residue protein sequence, read N- to C-terminus: Reticulon-1-B (752 aa).

4 disordered regions span residues 1–57 (MAAN…TSTD), 264–319 (EYPG…SEKQ), 334–424 (KAKE…SPSI), and 444–465 (ESCDGSSASEESPKRDPDSPMM). Residues 264–273 (EYPGNQQGKS) show a composition bias toward polar residues. Basic and acidic residues predominate over residues 334–361 (KAKEGTKRFSSETNDEKQSRSFHAEKQD). A compositionally biased stretch (polar residues) spans 363-383 (TVMSTEATSASHYTKASSAES). The region spanning 566-752 (AIDLLYWRDV…AKIPGTKQKE (187 aa)) is the Reticulon domain. The next 2 membrane-spanning stretches (helical) occupy residues 580–600 (IVFGSILLMLFSLTLFSVVSV) and 684–704 (VLMWLLTYVGALFNGLTLLIM).

As to expression, isoform A and isoform C are both expressed in the animal hemisphere (presumptive neural ectoderm) of blastula and gastrula stage embryos, and along the anterior neural border, in the panplacodal primordium, and in the dorsolateral side of archenteron roof of late neurula embryos. At the tailbud stage, expression of the isoforms begin to differ. Isoform A localizes to the cranial placodes including the trigeminal placode, lateral line placode, olfactory placode and otic vesicle. Isoform C localizes to the central nervous system, including the spinal cord, prosencephalon, mesencephalon and rhombencephalon, as well as the lateral line placode, otic vesicle and pronephros.

The protein localises to the endoplasmic reticulum membrane. It localises to the nucleus. Inhibits amyloid precursor protein processing, probably by blocking BACE1 activity. This Xenopus laevis (African clawed frog) protein is Reticulon-1-B (rtn1-b).